The following is a 132-amino-acid chain: Translation initiation factor 5A (132 aa).

Lys36 bears the Hypusine mark.

Belongs to the eIF-5A family.

It localises to the cytoplasm. In terms of biological role, functions by promoting the formation of the first peptide bond. The polypeptide is Translation initiation factor 5A (eIF5A) (Pyrobaculum arsenaticum (strain DSM 13514 / JCM 11321 / PZ6)).